The following is a 342-amino-acid chain: Phenylalanine--tRNA ligase alpha subunit (342 aa).

E257 contacts Mg(2+).

This sequence belongs to the class-II aminoacyl-tRNA synthetase family. Phe-tRNA synthetase alpha subunit type 1 subfamily. As to quaternary structure, tetramer of two alpha and two beta subunits. Mg(2+) serves as cofactor.

The protein resides in the cytoplasm. The catalysed reaction is tRNA(Phe) + L-phenylalanine + ATP = L-phenylalanyl-tRNA(Phe) + AMP + diphosphate + H(+). The polypeptide is Phenylalanine--tRNA ligase alpha subunit (Chlamydia trachomatis serovar A (strain ATCC VR-571B / DSM 19440 / HAR-13)).